The primary structure comprises 137 residues: Small heat shock protein IbpA (137 aa).

Positions 28 to 137 constitute a sHSP domain; that stretch reads NQSNGGYPPY…SLKPRRIEIK (110 aa).

It belongs to the small heat shock protein (HSP20) family. In terms of assembly, monomer. Forms homomultimers of about 100-150 subunits at optimal growth temperatures. Conformation changes to monomers at high temperatures or high ionic concentrations.

The protein resides in the cytoplasm. Its function is as follows. Associates with aggregated proteins, together with IbpB, to stabilize and protect them from irreversible denaturation and extensive proteolysis during heat shock and oxidative stress. Aggregated proteins bound to the IbpAB complex are more efficiently refolded and reactivated by the ATP-dependent chaperone systems ClpB and DnaK/DnaJ/GrpE. Its activity is ATP-independent. In Yersinia pseudotuberculosis serotype O:1b (strain IP 31758), this protein is Small heat shock protein IbpA.